The sequence spans 125 residues: Oxytocin-neurophysin 1 (125 aa).

An N-terminal signal peptide occupies residues 1–19; the sequence is MAGPSLACCLLGLLALTSA. A disulfide bond links Cys-20 and Cys-25. A Glycine amide modification is found at Gly-28. 7 cysteine pairs are disulfide-bonded: Cys-41/Cys-85, Cys-44/Cys-58, Cys-52/Cys-75, Cys-59/Cys-65, Cys-92/Cys-104, Cys-98/Cys-116, and Cys-105/Cys-110.

Belongs to the vasopressin/oxytocin family. In terms of assembly, interacts with oxytocin receptor (Ki=1.5 nM). Interacts with vasopressin V1aR/AVPR1A (Ki=37 nM), V1bR/AVPR1B (Ki=222 nM), and V2R/AVPR2 receptors (Ki=823 nM).

Its function is as follows. Neurophysin 1 specifically binds oxytocin. Functionally, oxytocin causes contraction of the smooth muscle of the uterus and of the mammary gland. Acts by binding to oxytocin receptor (OXTR). This chain is Oxytocin-neurophysin 1 (OXT), found in Sus scrofa (Pig).